A 341-amino-acid polypeptide reads, in one-letter code: Farnesyl pyrophosphate synthase (341 aa).

Lys48, Arg51, and Gln86 together coordinate isopentenyl diphosphate. Mg(2+) contacts are provided by Asp93 and Asp97. Dimethylallyl diphosphate is bound at residue Arg102. Arg103 contacts isopentenyl diphosphate. Lys190, Thr191, Gln229, and Lys246 together coordinate dimethylallyl diphosphate.

Belongs to the FPP/GGPP synthase family. It depends on Mg(2+) as a cofactor.

The protein resides in the cytoplasm. It catalyses the reaction isopentenyl diphosphate + dimethylallyl diphosphate = (2E)-geranyl diphosphate + diphosphate. It carries out the reaction isopentenyl diphosphate + (2E)-geranyl diphosphate = (2E,6E)-farnesyl diphosphate + diphosphate. The protein operates within isoprenoid biosynthesis; farnesyl diphosphate biosynthesis; farnesyl diphosphate from geranyl diphosphate and isopentenyl diphosphate: step 1/1. It participates in isoprenoid biosynthesis; geranyl diphosphate biosynthesis; geranyl diphosphate from dimethylallyl diphosphate and isopentenyl diphosphate: step 1/1. Its function is as follows. Catalyzes the sequential condensation of isopentenyl pyrophosphate with the allylic pyrophosphates, dimethylallyl pyrophosphate, and then with the resultant geranylpyrophosphate to the ultimate product farnesyl pyrophosphate. The chain is Farnesyl pyrophosphate synthase (FPS1) from Helianthus annuus (Common sunflower).